A 388-amino-acid chain; its full sequence is MNLHEYQAKELLASYGLPVQGGILAHNGEEAAAAYDKLGGKFAVVKAQVHAGGRGKAGGVKVVKSREEAKEVAESLIGTNLVTYQTDANGQPVNSVLVCEDMYPVQTELYLGAVVDRSTRRITFMASTEGGVEIEKVAAETPEKIFKVTVDPLVGLQPCQAREVAFQLGLKDKQINEFVKLMTGAYKAFVENDFALFEVNPLAVRENGALACVDGKIGIDSNALYRLPKIAELRDKSQENERELKASEFDLNYVALEGNIGCMVNGAGLAMATMDIIKLKGGQPANFLDVGGGATKDRVVEAFKLILEDKSVQGVLINIFGGIVRCDMIAEAIVAAVKEINVNVPVVVRLEGNNAELGAKILNESGLKLTSADGLNDAAEKIVAAVNA.

Residues Lys-9 to Lys-245 enclose the ATP-grasp domain. ATP contacts are provided by residues Lys-46, Gly-53–Gly-55, Glu-100, Tyr-103, and Glu-108. Residues Asn-200 and Asp-214 each coordinate Mg(2+). Substrate is bound by residues Asn-265 and Gly-322–Val-324.

It belongs to the succinate/malate CoA ligase beta subunit family. As to quaternary structure, heterotetramer of two alpha and two beta subunits. Requires Mg(2+) as cofactor.

It carries out the reaction succinate + ATP + CoA = succinyl-CoA + ADP + phosphate. It catalyses the reaction GTP + succinate + CoA = succinyl-CoA + GDP + phosphate. Its pathway is carbohydrate metabolism; tricarboxylic acid cycle; succinate from succinyl-CoA (ligase route): step 1/1. Functionally, succinyl-CoA synthetase functions in the citric acid cycle (TCA), coupling the hydrolysis of succinyl-CoA to the synthesis of either ATP or GTP and thus represents the only step of substrate-level phosphorylation in the TCA. The beta subunit provides nucleotide specificity of the enzyme and binds the substrate succinate, while the binding sites for coenzyme A and phosphate are found in the alpha subunit. The chain is Succinate--CoA ligase [ADP-forming] subunit beta from Neisseria meningitidis serogroup B (strain ATCC BAA-335 / MC58).